The following is a 153-amino-acid chain: Regulatory protein RecX (153 aa).

Belongs to the RecX family.

The protein localises to the cytoplasm. Functionally, modulates RecA activity. In Neisseria meningitidis serogroup C / serotype 2a (strain ATCC 700532 / DSM 15464 / FAM18), this protein is Regulatory protein RecX.